The primary structure comprises 199 residues: HTH-type transcriptional regulator BetI (199 aa).

One can recognise an HTH tetR-type domain in the interval 8-68; that stretch reads EIRKPQLVKA…ETMREILRQL (61 aa). Positions 31–50 form a DNA-binding region, H-T-H motif; the sequence is SISLISKEAGVSTGIINHYF.

The protein operates within amine and polyamine biosynthesis; betaine biosynthesis via choline pathway [regulation]. Functionally, repressor involved in the biosynthesis of the osmoprotectant glycine betaine. It represses transcription of the choline transporter BetT and the genes of BetAB involved in the synthesis of glycine betaine. The protein is HTH-type transcriptional regulator BetI of Vibrio parahaemolyticus serotype O3:K6 (strain RIMD 2210633).